The primary structure comprises 174 residues: RNA pyrophosphohydrolase (174 aa).

One can recognise a Nudix hydrolase domain in the interval 6–149 (GFRANVGIII…KRDVYRKVMK (144 aa)). Positions 38–59 (GGVDDGESAEEAMYRELYEEVG) match the Nudix box motif.

The protein belongs to the Nudix hydrolase family. RppH subfamily. A divalent metal cation serves as cofactor.

Its function is as follows. Accelerates the degradation of transcripts by removing pyrophosphate from the 5'-end of triphosphorylated RNA, leading to a more labile monophosphorylated state that can stimulate subsequent ribonuclease cleavage. The polypeptide is RNA pyrophosphohydrolase (Shewanella oneidensis (strain ATCC 700550 / JCM 31522 / CIP 106686 / LMG 19005 / NCIMB 14063 / MR-1)).